We begin with the raw amino-acid sequence, 380 residues long: Methylthioribose-1-phosphate isomerase (380 aa).

The active-site Proton donor is the aspartate 257.

It belongs to the eIF-2B alpha/beta/delta subunits family. MtnA subfamily.

It is found in the cytoplasm. Its subcellular location is the nucleus. It catalyses the reaction 5-(methylsulfanyl)-alpha-D-ribose 1-phosphate = 5-(methylsulfanyl)-D-ribulose 1-phosphate. It functions in the pathway amino-acid biosynthesis; L-methionine biosynthesis via salvage pathway; L-methionine from S-methyl-5-thio-alpha-D-ribose 1-phosphate: step 1/6. Its function is as follows. Catalyzes the interconversion of methylthioribose-1-phosphate (MTR-1-P) into methylthioribulose-1-phosphate (MTRu-1-P). The polypeptide is Methylthioribose-1-phosphate isomerase (Naegleria gruberi (Amoeba)).